The following is a 796-amino-acid chain: DNA damage-responsive transcriptional repressor RPH1 (796 aa).

The region spanning 14–55 (VPVFKPTYEQFEDFYAYCKAINKYGMKSGVVKVIPPKEWKDK) is the JmjN domain. The 163-residue stretch at 193-355 (PEGLNVWNVA…IGKKAGKCHC (163 aa)) folds into the JmjC domain. T399 is subject to Phosphothreonine. S430, S459, S557, S561, S575, and S584 each carry phosphoserine. The short motif at 455–471 (KRISSFQEQPLNKLLKR) is the Bipartite nuclear localization signal element. Residues 599–692 (RQQHSQQHSF…DKEQGSSPLN (94 aa)) are disordered. Polar residues predominate over residues 601–621 (QHSQQHSFSTPSTVSNLSTSV). Positions 629 to 640 (NDIKTPHPERPN) are enriched in basic and acidic residues. A Phosphoserine modification is found at S652. Polar residues predominate over residues 654-669 (VETSKSNLILSKVAST). Residues 670 to 686 (RQEDSFTSRNDDLDKEQ) are compositionally biased toward basic and acidic residues. S689 carries the post-translational modification Phosphoserine. The segment at 709–732 (YICKECQRKFSSGHHLTRHKKSVH) adopts a C2H2-type 1 zinc-finger fold. A C2H2-type 2; atypical zinc finger spans residues 738–763 (HSCPKCGKRFKRRDHVLQHLNKKIPC). A disordered region spans residues 774-796 (IMNPTVQPQDGKAAINQQSTPLN).

In terms of processing, RAD53-dependent phosphorylated in response to DNA damage.

The protein resides in the nucleus. In terms of biological role, transcriptional repressor of photolyase PHR1. Recognizes and binds the sequence AG(4) in the upstream repressing sequence of PHR1. Derepresses PHR1 transcription when phosphorylated. The chain is DNA damage-responsive transcriptional repressor RPH1 (RPH1) from Saccharomyces cerevisiae (strain ATCC 204508 / S288c) (Baker's yeast).